The primary structure comprises 277 residues: Large ribosomal subunit protein uL2 (277 aa).

The interval 219–277 (TVRGSVMNPNDHPHGGGEGRSPIGHPSPRTPWGKPALGYKTRKNKKYSDRFIVKRRHDK) is disordered.

It belongs to the universal ribosomal protein uL2 family. Part of the 50S ribosomal subunit. Forms a bridge to the 30S subunit in the 70S ribosome.

One of the primary rRNA binding proteins. Required for association of the 30S and 50S subunits to form the 70S ribosome, for tRNA binding and peptide bond formation. It has been suggested to have peptidyltransferase activity; this is somewhat controversial. Makes several contacts with the 16S rRNA in the 70S ribosome. This chain is Large ribosomal subunit protein uL2, found in Clostridium botulinum (strain Okra / Type B1).